The sequence spans 292 residues: Peroxisomal 2,4-dienoyl-CoA reductase [(3E)-enoyl-CoA-producing] (292 aa).

NADP(+) contacts are provided by residues 35–40 (GGGSGI), 60–64 (RSLPR), and Asp86. Arg60 provides a ligand contact to substrate. Residues Arg88, Phe118, and 126–128 (SFN) contribute to the substrate site. Residue Lys151 is modified to N6-acetyllysine. NADP(+) contacts are provided by residues Lys182 and 208 to 214 (PGAISGT). Arg219 is a binding site for substrate. Ser287 is modified (phosphoserine). A Microbody targeting signal motif is present at residues 290–292 (AKL). Position 291 is an N6-acetyllysine (Lys291).

The protein belongs to the short-chain dehydrogenases/reductases (SDR) family. 2,4-dienoyl-CoA reductase subfamily. In terms of assembly, monomer, dimer and oligomer.

It localises to the peroxisome. The catalysed reaction is a (2E,4Z)-dienoyl-CoA + NADPH + H(+) = a 4,5-saturated-(3E)-enoyl-CoA + NADP(+). It catalyses the reaction a (2E,4E)-dienoyl-CoA + NADPH + H(+) = a 4,5-saturated-(3E)-enoyl-CoA + NADP(+). The enzyme catalyses (2E,4E)-hexadienoyl-CoA + NADPH + H(+) = (3E)-hexenoyl-CoA + NADP(+). It carries out the reaction (2E,4E)-decadienoyl-CoA + NADPH + H(+) = (3E)-decenoyl-CoA + NADP(+). The catalysed reaction is (2E,4Z,7Z,10Z,13Z,16Z,19Z)-docosaheptaenoyl-CoA + NADPH + H(+) = (3E,7Z,10Z,13Z,16Z,19Z)-docosahexaenoyl-CoA + NADP(+). Functionally, auxiliary enzyme of beta-oxidation. Participates in the degradation of unsaturated fatty enoyl-CoA esters having double bonds in both even- and odd-numbered positions in peroxisome. Catalyzes the NADP-dependent reduction of 2,4-dienoyl-CoA to yield trans-3-enoyl-CoA. Has activity towards short and medium chain 2,4-dienoyl-CoAs, but also towards 2,4,7,10,13,16,19-docosaheptaenoyl-CoA, suggesting that it does not constitute a rate limiting step in the peroxisomal degradation of docosahexaenoic acid. In Rattus norvegicus (Rat), this protein is Peroxisomal 2,4-dienoyl-CoA reductase [(3E)-enoyl-CoA-producing] (Decr2).